A 440-amino-acid chain; its full sequence is Thymidine phosphorylase (440 aa).

The protein belongs to the thymidine/pyrimidine-nucleoside phosphorylase family. As to quaternary structure, homodimer.

The enzyme catalyses thymidine + phosphate = 2-deoxy-alpha-D-ribose 1-phosphate + thymine. The protein operates within pyrimidine metabolism; dTMP biosynthesis via salvage pathway; dTMP from thymine: step 1/2. The enzymes which catalyze the reversible phosphorolysis of pyrimidine nucleosides are involved in the degradation of these compounds and in their utilization as carbon and energy sources, or in the rescue of pyrimidine bases for nucleotide synthesis. The sequence is that of Thymidine phosphorylase from Salmonella dublin (strain CT_02021853).